Reading from the N-terminus, the 244-residue chain is Heat stress transcription factor B-3 (244 aa).

Residues Pro-38–Ser-132 mediate DNA binding. The segment at Thr-173 to Arg-218 is hydrophobic repeat HR-A/B. The short motif at Lys-202–Lys-208 is the Nuclear localization signal element. The interval Arg-216–Glu-244 is disordered. Positions Glu-220 to Glu-234 are enriched in acidic residues. The Nuclear export signal motif lies at Leu-236–Leu-243.

The protein belongs to the HSF family. Class B subfamily. Homotrimer. Exhibits temperature-dependent phosphorylation.

It is found in the cytoplasm. It localises to the nucleus. In terms of biological role, transcriptional regulator that specifically binds DNA sequence 5'-AGAAnnTTCT-3' known as heat shock promoter elements (HSE). The sequence is that of Heat stress transcription factor B-3 (HSFB3) from Arabidopsis thaliana (Mouse-ear cress).